The primary structure comprises 1825 residues: MKKEQAEILGFVPQKEIVYNKLLPYADQLDRESNDILAQIKGNLGRAVQLRELWPGVLFWTRKLSTYLRLYGRKFSKEDHVLFIKLLYELVTIPKLEISMMQSFARLLVNLLKKKELLSRDDLELPWRPLYDLYESILYSKTEHLGLNWFPNSVENVLKTLVKSCRVPESATQEMLDEWRPLLCPFDVTMQKAIGYFELFLPTIMPPEQHDKGFKLWFDEMMNLWVSVQNLPAWEGNLVNLFARLANDNIGYVNWDPYIPKIFTRILRSFNLPVGTSQMVVPRYLTNSYDIGHVVLWISSMLGGPQNQSQKQLNGLFSSIASFYHPSNNGRWLMKLMKLLQRLPASIVRRLHRERYKKPCWITPVPSTHKLTDQDVTDFVESMKQPVLMAMFSKTGSMDAAQALQNLALMRPELVIPPVLEKTYPAMETLTEPHQLTATLSCMIGMARSLLSGGRHYPEGPAHVLPLLMRALPGVDPNDFSKCMITFQFIATFTTLVPLVDCSSALHDKNDLTEMERELCSASAEFEDFVLQFMDRCFALIDSSTLEQTREETETEKMTHLESLVELGLSSTFSTILTQCSMEIFKVALEKVFNFATTNIFETRVAGRMVADMCRAASKCHPAESLRLFVPHCCNAITHLTANEDVSNEEELDKELLWNLQLLSEVTRVDGEKLLPYRTQLVQILQLTLRLRCKQGYSLACNLLHHVLRSTALIYPTDYCSVPGGFSRPLQEYLPIKDWGRPGDLWNLEIQWHVPSTEETAFVFYVLDLLLQPELQRLQRYAQGEQEMSRDDVLQSLCIVQHCLLGAGSMLPPLDGSTVTGLVPSMVNLEETKLYIGVDYDQSRENYREAVCKVMRQLLHYILEHSEDDTKSLFAIIKIISDLMHFKGSHKHEFDSRWKSFTLVKKSMENRLHGKKQHIRALLIDRVLLQHEMRKLLVEGCEYKTVHQDLLRDLLRLSTSTYSQVRSKAQNVLFTALGTYNFCCRDITPRVLEFLEPTRTDVTQQQFKGALYCLLGNHCGVCLANLHDWDCIAQTWPAIVRSGLSSAMSLEKPSIVRLFDDLADKVHRQYETIGIDFTVPENAVFLGRSITNSSQPTPHMGTPEDQELQQGLAVQQAKNREAEQKYEKLVKDLLECLDDRDLPWKFEHIAIGFLSLLLRDDYPLPAPAVFFFVQSLNHDALVVRKMAIAAVAGILKQLKRPRKKIPVNPCDISGVTEPEELEAGDRPGNDWLQYHSESLPNSQQDWDAFCFVEKTHWGYYSWPKKLMVYAPAAEQPKDLAPDTMSEREAIINDHFTDPTFINQLIKFLSLEDRKGKDKFNPRRFCLFKGLFRNYSDAFLPVLKPHMERLANDSHESTQRCVAEIIAGLIRGSKHWSFGKVEALWAFLIPLMRTALSNITVETYADWGTCVATACESRDPRKLHWLLEMLMECPLSGEGGSFVDACHLYVLQGGLAQQEWRVPELLHRLLSYLEPKLTQVYKNVRERIGSVLTYIFMIDVALPYTLPTKSPHIAEFTERILSQLKPLIEGDEEIQNHVVEENGVGEQDERTQAIKLLKTVLKWLMASAGRSFSTPVPQQLQLLPLLFKIAPVENDDSYDELKRDAKTCLSLMSQGLLYPEQIPMVLAVLHEIAGSSSWHARYSVLTYLQTMVFYNLFTILSSEQCVQGVRALVIRLLEDEQLEVREMAATTLSGFLQCNFLAMDSSMQTHFEALCKTRLPKKRKRDVGSVMDTIPSVDLVRRHAGVLGLSACILSSPYDVPTWMPQLLMDLSAHLNDTQPIEMTVKKTLSNFRRTHHDNWLEHKQQFTDDQLVVLTDLLVSPCYYA.

6 HEAT repeats span residues 458 to 502 (PEGP…LVDC), 981 to 1020 (NFCC…NHCG), 1162 to 1200 (YPLP…QLKR), 1336 to 1374 (DAFL…GSKH), 1618 to 1656 (PEQI…YNLF), and 1662 to 1700 (EQCV…CNFL). The segment at 1632-1720 (AGSSSWHARY…EALCKTRLPK (89 aa)) is bromodomain-like (BRDL).

It belongs to the BLM10 family. Homodimer. Interacts with the 20S and 26S proteasomes.

Its subcellular location is the cytoplasm. The protein localises to the cytosol. It is found in the nucleus. The protein resides in the nucleus speckle. Associated component of the proteasome that specifically recognizes acetylated histones and promotes ATP- and ubiquitin-independent degradation of core histones during DNA damage response. Recognizes and binds acetylated histones via its bromodomain-like (BRDL) region and activates the proteasome by opening the gated channel for substrate entry. Binds to the core proteasome via its C-terminus, which occupies the same binding sites as the proteasomal ATPases, opening the closed structure of the proteasome via an active gating mechanism. involved in DNA damage response in somatic cells: binds to acetylated histones and promotes degradation of histones. This Danio rerio (Zebrafish) protein is Proteasome activator complex subunit 4B (psme4b).